Reading from the N-terminus, the 381-residue chain is uncharacterized protein (381 aa).

The segment at 176 to 292 (HAAGKIKKSK…EPMVDETPQN (117 aa)) is disordered. Residues 177-186 (AAGKIKKSKN) show a composition bias toward basic residues. Positions 187–212 (QKKDGTLSRPLGKKENKSVVKVKIEE) are enriched in basic and acidic residues. A compositionally biased stretch (acidic residues) spans 276-286 (DEEDEDEEPMV).

This is an uncharacterized protein from Caenorhabditis elegans.